We begin with the raw amino-acid sequence, 176 residues long: Small ribosomal subunit protein uS4 (176 aa).

One can recognise an S4 RNA-binding domain in the interval 104–166 (RRLQTIVYKK…PTSPFKQNPP (63 aa)).

The protein belongs to the universal ribosomal protein uS4 family. In terms of assembly, part of the 30S ribosomal subunit. Contacts protein S5. The interaction surface between S4 and S5 is involved in control of translational fidelity.

Its function is as follows. One of the primary rRNA binding proteins, it binds directly to 16S rRNA where it nucleates assembly of the body of the 30S subunit. With S5 and S12 plays an important role in translational accuracy. This chain is Small ribosomal subunit protein uS4 (rps4), found in Sulfolobus acidocaldarius (strain ATCC 33909 / DSM 639 / JCM 8929 / NBRC 15157 / NCIMB 11770).